The following is a 343-amino-acid chain: Ribosomal RNA small subunit methyltransferase C (343 aa).

This sequence belongs to the methyltransferase superfamily. RsmC family. Monomer.

It is found in the cytoplasm. The enzyme catalyses guanosine(1207) in 16S rRNA + S-adenosyl-L-methionine = N(2)-methylguanosine(1207) in 16S rRNA + S-adenosyl-L-homocysteine + H(+). Its function is as follows. Specifically methylates the guanine in position 1207 of 16S rRNA in the 30S particle. The polypeptide is Ribosomal RNA small subunit methyltransferase C (Escherichia fergusonii (strain ATCC 35469 / DSM 13698 / CCUG 18766 / IAM 14443 / JCM 21226 / LMG 7866 / NBRC 102419 / NCTC 12128 / CDC 0568-73)).